Reading from the N-terminus, the 381-residue chain is ADP,ATP carrier protein 1, mitochondrial (381 aa).

A mitochondrion-targeting transit peptide spans 1-70 (MVDQVQHPTI…ATTASPVFVQ (70 aa)). Solcar repeat units lie at residues 78 to 171 (TNFA…FKRL), 183 to 276 (KWFA…VKPV), and 284 to 370 (DSFF…LQLI). 5 consecutive transmembrane segments (helical) span residues 80–107 (FALD…VKLL), 148–172 (TANV…KRLF), 181–201 (YWKW…SSLL), 252–273 (FNIS…YDSV), and 287–307 (FASF…SYPI). ADP-binding residues include arginine 153 and lysine 165. Position 311 (arginine 311) interacts with ADP. The interval 311 to 316 (RRRMMM) is important for transport activity. A Nucleotide carrier signature motif motif is present at residues 311-316 (RRRMMM). A helical membrane pass occupies residues 347-367 (AGANILRAVAGAGVLSGYDKL).

Belongs to the mitochondrial carrier (TC 2.A.29) family. As to quaternary structure, monomer.

It localises to the mitochondrion inner membrane. It carries out the reaction ADP(in) + ATP(out) = ADP(out) + ATP(in). Its activity is regulated as follows. The matrix-open state (m-state) is inhibited by the membrane-permeable bongkrekic acid (BKA). The cytoplasmic-open state (c-state) is inhibited by the membrane-impermeable toxic inhibitor carboxyatractyloside (CATR). Its function is as follows. ADP:ATP antiporter that mediates import of ADP into the mitochondrial matrix for ATP synthesis, and export of ATP out to fuel the cell. Cycles between the cytoplasmic-open state (c-state) and the matrix-open state (m-state): operates by the alternating access mechanism with a single substrate-binding site intermittently exposed to either the cytosolic (c-state) or matrix (m-state) side of the inner mitochondrial membrane. The protein is ADP,ATP carrier protein 1, mitochondrial (AAC1) of Arabidopsis thaliana (Mouse-ear cress).